The chain runs to 705 residues: Prolyl endopeptidase (705 aa).

The signal sequence occupies residues 1–20; it reads MKYNKLSVAVAAFAFAAVSA. Residues Ser556 and His675 each act as charge relay system in the active site.

This sequence belongs to the peptidase S9A family. In terms of assembly, monomer.

Its subcellular location is the periplasm. It carries out the reaction Hydrolysis of Pro-|-Xaa &gt;&gt; Ala-|-Xaa in oligopeptides.. In terms of biological role, cleaves peptide bonds on the C-terminal side of prolyl residues within peptides that are up to approximately 30 amino acids long. Has an absolute requirement for an X-Pro bond in the trans configuration immediately preceding the Pro-Y scissible bond. The polypeptide is Prolyl endopeptidase (f1pep1) (Elizabethkingia meningoseptica (Chryseobacterium meningosepticum)).